We begin with the raw amino-acid sequence, 591 residues long: Eukaryotic translation initiation factor 3 subunit D (591 aa).

The tract at residues 100–159 is disordered; it reads SGGNPDEDAAFRLVDGKPPPRPKFGPKWRFNPHHNRNQLPQRRDEEVEAKKRDAEKERAR. Basic residues predominate over residues 123 to 135; it reads FGPKWRFNPHHNR. Basic and acidic residues predominate over residues 140–159; sequence QRRDEEVEAKKRDAEKERAR. Residues 309–323 form an RNA gate region; that stretch reads QLDLLSVHETSQEPL. The segment covering 549 to 560 has biased composition (acidic residues); it reads DYVEEPLPEDEQ. Residues 549 to 591 are disordered; that stretch reads DYVEEPLPEDEQVQPTEENTEGAEASVAATKETEEKKADDAQA. Positions 579–591 are enriched in basic and acidic residues; the sequence is KETEEKKADDAQA.

This sequence belongs to the eIF-3 subunit D family. As to quaternary structure, component of the eukaryotic translation initiation factor 3 (eIF-3) complex, which is composed of at least 13 different subunits.

The protein resides in the cytoplasm. Its function is as follows. mRNA cap-binding component of the eukaryotic translation initiation factor 3 (eIF-3) complex, which is involved in protein synthesis of a specialized repertoire of mRNAs and, together with other initiation factors, stimulates binding of mRNA and methionyl-tRNAi to the 40S ribosome. The eIF-3 complex specifically targets and initiates translation of a subset of mRNAs involved in cell proliferation. In the eIF-3 complex, eif3d specifically recognizes and binds the 7-methylguanosine cap of a subset of mRNAs. This is Eukaryotic translation initiation factor 3 subunit D (TIF3D1) from Arabidopsis thaliana (Mouse-ear cress).